Here is a 583-residue protein sequence, read N- to C-terminus: Isocitrate dehydrogenase kinase/phosphatase (583 aa).

ATP-binding positions include 315-321 (APGIRGM) and Lys336. Residue Asp371 is part of the active site.

This sequence belongs to the AceK family.

The protein resides in the cytoplasm. It carries out the reaction L-seryl-[isocitrate dehydrogenase] + ATP = O-phospho-L-seryl-[isocitrate dehydrogenase] + ADP + H(+). Bifunctional enzyme which can phosphorylate or dephosphorylate isocitrate dehydrogenase (IDH) on a specific serine residue. This is a regulatory mechanism which enables bacteria to bypass the Krebs cycle via the glyoxylate shunt in response to the source of carbon. When bacteria are grown on glucose, IDH is fully active and unphosphorylated, but when grown on acetate or ethanol, the activity of IDH declines drastically concomitant with its phosphorylation. The sequence is that of Isocitrate dehydrogenase kinase/phosphatase from Salmonella enteritidis PT4 (strain P125109).